A 338-amino-acid chain; its full sequence is 2-methyl-6-phytyl-1,4-hydroquinone methyltransferase, chloroplastic (338 aa).

The N-terminal 51 residues, 1–51 (MASLMLNGAITFPKGLGSPGSNLHARSIPRPTLLSVTRTSTPRLSVATRCS), are a transit peptide targeting the chloroplast. Residues 52-307 (SSSVSSSRPS…VNNPFSFLGR (256 aa)) are Chloroplast intermembrane-facing. Residues 114-123 (VVDVGGGTGF) form an SAM motif I region. Residues 159–172 (CKIVEGDAEDLPFP) are SAM motif II. Residues 200 to 213 (RVLKIGGKACLIGP) are SAM motif III. The chain crosses the membrane as a helical span at residues 308–328 (FLLGTLAAAWFVLIPIYMWIK). The Stromal portion of the chain corresponds to 329 to 338 (DQIVPKDQPI).

This sequence belongs to the class I-like SAM-binding methyltransferase superfamily. MPBQ/MBSQ MT family.

The protein resides in the plastid. It is found in the chloroplast inner membrane. It carries out the reaction 2-methyl-6-phytyl-1,4-benzene-1,4-diol + S-adenosyl-L-methionine = 2,3-dimethyl-6-phytylbenzene-1,4-diol + S-adenosyl-L-homocysteine + H(+). The catalysed reaction is 2-methyl-6-(all-trans-nonaprenyl)benzene-1,4-diol + S-adenosyl-L-methionine = plastoquinol-9 + S-adenosyl-L-homocysteine + H(+). The enzyme catalyses 6-geranylgeranyl-2-methylbenzene-1,4-diol + S-adenosyl-L-methionine = 6-geranylgeranyl-2,3-dimethylbenzene-1,4-diol + S-adenosyl-L-homocysteine + H(+). It participates in cofactor biosynthesis; tocopherol biosynthesis. In terms of biological role, involved in a key methylation step in both tocopherols (vitamin E) and plastoquinone synthesis. Catalyzes the conversion of 2-methyl-6-phytyl-1,4-hydroquinone (MPBQ) to 2,3-dimethyl-6-phytyl-1,4-hydroquinone (DMPQ, a substrate for tocopherol cyclase), and 2-methyl-6-solanyl-1,4-benzoquinone (MSBQ) to plastoquinone. The polypeptide is 2-methyl-6-phytyl-1,4-hydroquinone methyltransferase, chloroplastic (VTE3) (Arabidopsis thaliana (Mouse-ear cress)).